Here is a 270-residue protein sequence, read N- to C-terminus: Phosphatidylglycerol--prolipoprotein diacylglyceryl transferase (270 aa).

4 consecutive transmembrane segments (helical) span residues 19–39, 56–76, 92–112, and 116–136; these read FPVYWYGIIIGTGVLLGLWLA, LVLIAVPIAILFARMYYVIFE, QGGLAIHGGLIGAVITGILFA, and GVSFWKLADIAAPSILLGQAI. R138 is an a 1,2-diacyl-sn-glycero-3-phospho-(1'-sn-glycerol) binding site. Helical transmembrane passes span 178–198, 206–226, and 236–256; these read HPTFLYESLWNFVGVILLLAL, GELFFTYLIWYSVGRFFVEGL, and LRIAQVMSIGLVVISIIFIIV.

This sequence belongs to the Lgt family.

It is found in the cell membrane. The enzyme catalyses L-cysteinyl-[prolipoprotein] + a 1,2-diacyl-sn-glycero-3-phospho-(1'-sn-glycerol) = an S-1,2-diacyl-sn-glyceryl-L-cysteinyl-[prolipoprotein] + sn-glycerol 1-phosphate + H(+). The protein operates within protein modification; lipoprotein biosynthesis (diacylglyceryl transfer). Functionally, catalyzes the transfer of the diacylglyceryl group from phosphatidylglycerol to the sulfhydryl group of the N-terminal cysteine of a prolipoprotein, the first step in the formation of mature lipoproteins. The sequence is that of Phosphatidylglycerol--prolipoprotein diacylglyceryl transferase from Bacillus cereus (strain G9842).